We begin with the raw amino-acid sequence, 126 residues long: Ribulose bisphosphate carboxylase small subunit, chloroplastic 1 (126 aa).

It belongs to the RuBisCO small chain family. In terms of assembly, heterohexadecamer of 8 large and 8 small subunits.

The protein localises to the plastid. Its subcellular location is the chloroplast. Functionally, ruBisCO catalyzes two reactions: the carboxylation of D-ribulose 1,5-bisphosphate, the primary event in carbon dioxide fixation, as well as the oxidative fragmentation of the pentose substrate. Both reactions occur simultaneously and in competition at the same active site. Although the small subunit is not catalytic it is essential for maximal activity. In Acetabularia peniculus (Green alga), this protein is Ribulose bisphosphate carboxylase small subunit, chloroplastic 1.